The sequence spans 298 residues: N-acetylmuramic acid 6-phosphate etherase (298 aa).

An SIS domain is found at 55–218 (IHAQVSGGGR…STGLMIKSGK (164 aa)). The active-site Proton donor is Glu-83. Residue Glu-114 is part of the active site.

This sequence belongs to the GCKR-like family. MurNAc-6-P etherase subfamily. Homodimer.

The enzyme catalyses N-acetyl-D-muramate 6-phosphate + H2O = N-acetyl-D-glucosamine 6-phosphate + (R)-lactate. It participates in amino-sugar metabolism; N-acetylmuramate degradation. The protein operates within amino-sugar metabolism; 1,6-anhydro-N-acetylmuramate degradation. It functions in the pathway cell wall biogenesis; peptidoglycan recycling. In terms of biological role, specifically catalyzes the cleavage of the D-lactyl ether substituent of MurNAc 6-phosphate, producing GlcNAc 6-phosphate and D-lactate. Together with AnmK, is also required for the utilization of anhydro-N-acetylmuramic acid (anhMurNAc) either imported from the medium or derived from its own cell wall murein, and thus plays a role in cell wall recycling. The polypeptide is N-acetylmuramic acid 6-phosphate etherase (Escherichia coli (strain K12 / MC4100 / BW2952)).